We begin with the raw amino-acid sequence, 318 residues long: GTP 3',8-cyclase (318 aa).

The Radical SAM core domain occupies 4–218; sequence KHGRNIDYLR…MSRSDLIPIE (215 aa). Residue Arg-13 coordinates GTP. The [4Fe-4S] cluster site is built by Cys-20 and Cys-24. Tyr-26 is an S-adenosyl-L-methionine binding site. Cys-27 serves as a coordination point for [4Fe-4S] cluster. Arg-62 provides a ligand contact to GTP. Residue Gly-66 coordinates S-adenosyl-L-methionine. Thr-93 is a GTP binding site. Ser-117 contacts S-adenosyl-L-methionine. Lys-154 contacts GTP. Residue Met-188 participates in S-adenosyl-L-methionine binding. The [4Fe-4S] cluster site is built by Cys-248 and Cys-251. 253–255 serves as a coordination point for GTP; that stretch reads KIR. Cys-265 is a [4Fe-4S] cluster binding site.

It belongs to the radical SAM superfamily. MoaA family. In terms of assembly, monomer and homodimer. It depends on [4Fe-4S] cluster as a cofactor.

The enzyme catalyses GTP + AH2 + S-adenosyl-L-methionine = (8S)-3',8-cyclo-7,8-dihydroguanosine 5'-triphosphate + 5'-deoxyadenosine + L-methionine + A + H(+). The protein operates within cofactor biosynthesis; molybdopterin biosynthesis. Functionally, catalyzes the cyclization of GTP to (8S)-3',8-cyclo-7,8-dihydroguanosine 5'-triphosphate. This is GTP 3',8-cyclase from Clostridium acetobutylicum (strain ATCC 824 / DSM 792 / JCM 1419 / IAM 19013 / LMG 5710 / NBRC 13948 / NRRL B-527 / VKM B-1787 / 2291 / W).